A 264-amino-acid polypeptide reads, in one-letter code: 4-oxalocrotonate decarboxylase (264 aa).

The protein belongs to the hydratase/decarboxylase family.

It carries out the reaction (3E)-2-oxohex-3-enedioate + H(+) = 2-oxopent-4-enoate + CO2. Its pathway is aromatic compound metabolism; benzoate degradation via hydroxylation. The chain is 4-oxalocrotonate decarboxylase (dmpH) from Pseudomonas sp. (strain CF600).